Consider the following 105-residue polypeptide: uncharacterized protein (105 aa).

2 consecutive transmembrane segments (helical) span residues 56-76 and 85-105; these read ALIWSRKAIMRLIGLVVVLII and INLNPYLVWVITTLILMGVFY.

It is found in the membrane. This is an uncharacterized protein from Aedes vexans (Inland floodwater mosquito).